We begin with the raw amino-acid sequence, 380 residues long: Ribosomal RNA large subunit methyltransferase F (380 aa).

The disordered stretch occupies residues 1 to 32 (MSHKTKPSTQERKAGKPSAPKRKVISKSPNSK).

Belongs to the methyltransferase superfamily. METTL16/RlmF family.

The protein localises to the cytoplasm. The enzyme catalyses adenosine(1618) in 23S rRNA + S-adenosyl-L-methionine = N(6)-methyladenosine(1618) in 23S rRNA + S-adenosyl-L-homocysteine + H(+). In terms of biological role, specifically methylates the adenine in position 1618 of 23S rRNA. This chain is Ribosomal RNA large subunit methyltransferase F, found in Shewanella halifaxensis (strain HAW-EB4).